Reading from the N-terminus, the 294-residue chain is 33 kDa chaperonin (294 aa).

Disulfide bonds link C239–C241 and C272–C275.

It belongs to the HSP33 family. Post-translationally, under oxidizing conditions two disulfide bonds are formed involving the reactive cysteines. Under reducing conditions zinc is bound to the reactive cysteines and the protein is inactive.

It is found in the cytoplasm. In terms of biological role, redox regulated molecular chaperone. Protects both thermally unfolding and oxidatively damaged proteins from irreversible aggregation. Plays an important role in the bacterial defense system toward oxidative stress. The protein is 33 kDa chaperonin of Listeria monocytogenes serotype 4b (strain CLIP80459).